The chain runs to 72 residues: Dermaseptin AA-3-4 (72 aa).

The signal sequence occupies residues 1–22; sequence MAFLKKSLFLVLFLGLVSLSIC. Positions 23–43 are excised as a propeptide; that stretch reads DEEKRENEDEEEQEDDEQSEE. A disordered region spans residues 24–45; it reads EEKRENEDEEEQEDDEQSEEKR. Positions 30–41 are enriched in acidic residues; it reads EDEEEQEDDEQS.

It belongs to the frog skin active peptide (FSAP) family. Expressed by the skin glands.

It localises to the secreted. Its function is as follows. Possesses a potent antimicrobial activity against Gram-positive and Gram-negative bacteria. Probably acts by disturbing membrane functions with its amphipathic structure. This chain is Dermaseptin AA-3-4, found in Agalychnis annae (Blue-sided leaf frog).